The chain runs to 396 residues: Putative peptide chain release factor 1, mitochondrial (396 aa).

Gln270 bears the N5-methylglutamine mark.

Belongs to the prokaryotic/mitochondrial release factor family. Post-translationally, methylation of glutamine in the GGQ triplet is conserved from bacteria to mammals.

It localises to the mitochondrion. This chain is Putative peptide chain release factor 1, mitochondrial, found in Schizosaccharomyces pombe (strain 972 / ATCC 24843) (Fission yeast).